The chain runs to 220 residues: Grancalcin (220 aa).

4 EF-hand domains span residues 51–86, 92–127, 122–157, and 158–193; these read SPAD…SGIS, FSLE…LNAW, AALN…MGYR, and LSPQ…ALTD. The Ca(2+) site is built by D105, D107, T109, K111, E116, D135, D137, S139, T141, and E146.

As to quaternary structure, homodimer. Interacts with SRI and LCP1.

The protein resides in the cytoplasm. The protein localises to the cytoplasmic granule membrane. Calcium-binding protein that may play a role in the adhesion of neutrophils to fibronectin. May play a role in the formation of focal adhesions. The polypeptide is Grancalcin (Gca) (Mus musculus (Mouse)).